Consider the following 278-residue polypeptide: 4-deoxy-L-threo-5-hexosulose-uronate ketol-isomerase (278 aa).

Residues histidine 196, histidine 198, glutamate 203, and histidine 245 each contribute to the Zn(2+) site.

This sequence belongs to the KduI family. It depends on Zn(2+) as a cofactor.

The catalysed reaction is 5-dehydro-4-deoxy-D-glucuronate = 3-deoxy-D-glycero-2,5-hexodiulosonate. The protein operates within glycan metabolism; pectin degradation; 2-dehydro-3-deoxy-D-gluconate from pectin: step 4/5. Catalyzes the isomerization of 5-dehydro-4-deoxy-D-glucuronate to 3-deoxy-D-glycero-2,5-hexodiulosonate. This chain is 4-deoxy-L-threo-5-hexosulose-uronate ketol-isomerase, found in Burkholderia cenocepacia (strain ATCC BAA-245 / DSM 16553 / LMG 16656 / NCTC 13227 / J2315 / CF5610) (Burkholderia cepacia (strain J2315)).